Here is a 240-residue protein sequence, read N- to C-terminus: Uridylate kinase (240 aa).

Residue 12–15 (KLSG) participates in ATP binding. The segment at 20 to 25 (GEQGNG) is involved in allosteric activation by GTP. Gly-54 contributes to the UMP binding site. Residues Gly-55 and Arg-59 each contribute to the ATP site. Residues Asp-74 and 135 to 142 (TGNPYFST) each bind UMP. 3 residues coordinate ATP: Asn-163, Tyr-169, and Asp-172.

The protein belongs to the UMP kinase family. Homohexamer.

Its subcellular location is the cytoplasm. The catalysed reaction is UMP + ATP = UDP + ADP. It functions in the pathway pyrimidine metabolism; CTP biosynthesis via de novo pathway; UDP from UMP (UMPK route): step 1/1. Its activity is regulated as follows. Allosterically activated by GTP. Inhibited by UTP. In terms of biological role, catalyzes the reversible phosphorylation of UMP to UDP. This is Uridylate kinase from Bacillus licheniformis (strain ATCC 14580 / DSM 13 / JCM 2505 / CCUG 7422 / NBRC 12200 / NCIMB 9375 / NCTC 10341 / NRRL NRS-1264 / Gibson 46).